Reading from the N-terminus, the 461-residue chain is Probable ribonuclease FAU-1 (461 aa).

An S1 motif domain is found at 89–158 (GAVFYGEVTE…ARPSLATALR (70 aa)).

The protein belongs to the FAU-1 family.

Probable RNase involved in rRNA stability through maturation and/or degradation of precursor rRNAs. Binds to RNA in loop regions with AU-rich sequences. In Natronomonas pharaonis (strain ATCC 35678 / DSM 2160 / CIP 103997 / JCM 8858 / NBRC 14720 / NCIMB 2260 / Gabara) (Halobacterium pharaonis), this protein is Probable ribonuclease FAU-1.